Consider the following 947-residue polypeptide: Bromodomain testis-specific protein (947 aa).

The region spanning 27-133 (RLTNQLQYLQ…KLFVQKLSQM (107 aa)) is the Bromo 1 domain. The residue at position 187 (Ser-187) is a Phosphoserine. A Nuclear localization signal motif is present at residues 209 to 220 (KGVKRKADTTTP). The region spanning 267-376 (VKVTEQLRHC…DVFETHFSKI (110 aa)) is the Bromo 2 domain. Disordered regions lie at residues 395–421 (ETTGRENTNEASSEGNSSGDSEDERVQ), 444–512 (PFRK…PMNY), 610–690 (NNQL…VKKM), and 849–873 (HLEQNTKEPKVSQENQRDLGNGLTV). Positions 403–413 (NEASSEGNSSG) are enriched in low complexity. The stretch at 417–470 (DERVQRLAKLQEQLKAVHQQLQVLSQVPFRKLNKKKEKSKKEKKKEKVNNSNEN) forms a coiled coil. Basic residues predominate over residues 447 to 462 (KLNKKKEKSKKEKKKE). Residues 470–481 (NPRKMCEQMRLK) are compositionally biased toward basic and acidic residues. The span at 482–494 (EKSKRNQPKKRKQ) shows a compositional bias: basic residues. The 83-residue stretch at 500–582 (KSEDEDNAKP…ACLRKRPLKP (83 aa)) folds into the NET domain. A compositionally biased stretch (low complexity) spans 631–668 (VGSVSRLSESSSSSSSSSESESSSSDLSSSDSSGSESE). 2 stretches are compositionally biased toward basic and acidic residues: residues 674–690 (TEVKPNDSPSKENVKKM) and 849–865 (HLEQNTKEPKVSQENQR).

The protein belongs to the BET family. Interacts with SMARCE1. Interacts with mRNA splicing machinery proteins SRSF2, DDX5, HNRNPK and TARDBP. Interacts with the acetylated N-terminus of histone H1, H2, H3 and H4. Interacts with P-TEFb components CDK9 and CCNT1/cyclin-T1. In terms of processing, ubiquitinated in a SPOP-dependent manner, leading to proteasomal degradation.

The protein resides in the nucleus. Its function is as follows. Testis-specific chromatin protein that specifically binds histone H4 acetylated at 'Lys-5' and 'Lys-8' (H4K5ac and H4K8ac, respectively) and plays a key role in spermatogenesis. Required in late pachytene spermatocytes: plays a role in meiotic and post-meiotic cells by binding to acetylated histones at the promoter of specific meiotic and post-meiotic genes, facilitating their activation at the appropriate time. In the post-meiotic phase of spermatogenesis, binds to hyperacetylated histones and participates in their general removal from DNA. Also recognizes and binds a subset of butyrylated histones: able to bind histone H4 butyrylated at 'Lys-8' (H4K8ac), while it is not able to bind H4 butyrylated at 'Lys-5' (H4K5ac). Also acts as a component of the splicing machinery in pachytene spermatocytes and round spermatids and participates in 3'-UTR truncation of specific mRNAs in post-meiotic spermatids. Required for chromocenter organization, a structure comprised of peri-centromeric heterochromatin. This is Bromodomain testis-specific protein (BRDT) from Macaca fascicularis (Crab-eating macaque).